Reading from the N-terminus, the 1237-residue chain is Anion exchange protein 2 (1237 aa).

Residues 1–237 form a disordered region; the sequence is MSSAPRRPAS…SYNLQERRRI (237 aa). Over 1 to 704 the chain is Cytoplasmic; sequence MSSAPRRPAS…DFRDALDPQC (704 aa). Basic and acidic residues-rich tracts occupy residues 37 to 49 and 58 to 75; these read ELHR…RFEE and GGEE…EYHR. Composition is skewed to basic residues over residues 76 to 85 and 94 to 110; these read QSSHHIHHPL and RRRK…RRRP. Phosphoserine is present on residues serine 113, serine 132, serine 144, serine 170, and serine 172. Acidic residues predominate over residues 120–133; that stretch reads TIEEGEEDEDEASE. A compositionally biased stretch (low complexity) spans 137–151; that stretch reads ARAPTQPSPASTPSS. Gly residues predominate over residues 205–215; sequence GTAGGDDGGAS. Phosphoserine is present on serine 239. At threonine 253 the chain carries Phosphothreonine. An N6-methyllysine modification is found at lysine 270. Residues 286 to 316 form a disordered region; the sequence is RKNAKGSVQSGREGREPGPTPRARPRAPHKP. At serine 439 the chain carries Phosphoserine. The disordered stretch occupies residues 445-466; that stretch reads SLLGHHHGQGAESDPHVTEPLI. Residues 704–1237 are membrane (anion exchange); sequence CLAAVIFIYF…DEYNEMPMPV (534 aa). Transmembrane regions (helical) follow at residues 705–725, 750–770, 792–812, and 822–842; these read LAAV…FGGL, FCLL…LLVF, IGFW…SFLV, and IFAF…LVKI. At 843-893 the chain is on the extracellular side; it reads FQEHPLHGCSVSNSSEADSGDNATWAGTRVTLGLGNGSSAGPAGQGRPRGQ. N-linked (GlcNAc...) asparagine glycosylation is found at asparagine 855, asparagine 864, and asparagine 878. A helical transmembrane segment spans residues 894–914; the sequence is PNTALLSLVLMAGTFFIAFFL. Topologically, residues 915 to 929 are cytoplasmic; sequence RKFKNGRFFPGRVRR. The next 5 helical transmembrane spans lie at 930–950, 985–1005, 1032–1052, 1086–1106, and 1109–1129; these read VIGD…DYSI, FPVW…ILIF, LLLI…WLAA, RVTG…GDLL, and IPLA…LNGI. Cysteine 1169 carries the S-palmitoyl cysteine lipid modification. The chain crosses the membrane as a helical span at residues 1170-1190; it reads LALLWAVMSTAASLAFPFILI.

This sequence belongs to the anion exchanger (TC 2.A.31) family.

Its subcellular location is the apical cell membrane. It localises to the basolateral cell membrane. It carries out the reaction hydrogencarbonate(in) + chloride(out) = hydrogencarbonate(out) + chloride(in). In terms of biological role, sodium-independent anion exchanger which mediates the electroneutral exchange of chloride for bicarbonate ions across the cell membrane. Plays an important role in osteoclast differentiation and function. Regulates bone resorption and calpain-dependent actin cytoskeleton organization in osteoclasts via anion exchange-dependent control of pH. Essential for intracellular pH regulation in CD8(+) T-cells upon CD3 stimulation, modulating CD8(+) T-cell response. This chain is Anion exchange protein 2 (SLC4A2), found in Equus caballus (Horse).